The chain runs to 130 residues: Small ribosomal subunit protein uS9 (130 aa).

This sequence belongs to the universal ribosomal protein uS9 family.

This chain is Small ribosomal subunit protein uS9, found in Streptococcus equi subsp. zooepidemicus (strain H70).